The following is a 260-amino-acid chain: NAD-capped RNA hydrolase NudC (260 aa).

Arginine 69 contributes to the substrate binding site. The Zn(2+) site is built by cysteine 98 and cysteine 101. Glutamate 111 lines the substrate pocket. Zn(2+) contacts are provided by cysteine 116 and cysteine 119. A substrate-binding site is contributed by tyrosine 124. The region spanning 125 to 248 (PQIAPCIIVA…TVARRLIEDT (124 aa)) is the Nudix hydrolase domain. Residues alanine 158, glutamate 174, and glutamate 178 each coordinate a divalent metal cation. The Nudix box motif lies at 159-180 (GFVEVGETLEQTVVREVMEESQ). 192 to 199 (QPWPFPHS) serves as a coordination point for substrate. Glutamate 219 serves as a coordination point for a divalent metal cation. Alanine 241 contributes to the substrate binding site.

Belongs to the Nudix hydrolase family. NudC subfamily. Homodimer. The cofactor is Mg(2+). It depends on Mn(2+) as a cofactor. Requires Zn(2+) as cofactor.

The catalysed reaction is a 5'-end NAD(+)-phospho-ribonucleoside in mRNA + H2O = a 5'-end phospho-adenosine-phospho-ribonucleoside in mRNA + beta-nicotinamide D-ribonucleotide + 2 H(+). It catalyses the reaction NAD(+) + H2O = beta-nicotinamide D-ribonucleotide + AMP + 2 H(+). The enzyme catalyses NADH + H2O = reduced beta-nicotinamide D-ribonucleotide + AMP + 2 H(+). Its function is as follows. mRNA decapping enzyme that specifically removes the nicotinamide adenine dinucleotide (NAD) cap from a subset of mRNAs by hydrolyzing the diphosphate linkage to produce nicotinamide mononucleotide (NMN) and 5' monophosphate mRNA. The NAD-cap is present at the 5'-end of some mRNAs and stabilizes RNA against 5'-processing. Has preference for mRNAs with a 5'-end purine. Catalyzes the hydrolysis of a broad range of dinucleotide pyrophosphates. The polypeptide is NAD-capped RNA hydrolase NudC (Pectobacterium carotovorum subsp. carotovorum (strain PC1)).